Here is a 140-residue protein sequence, read N- to C-terminus: MSIRERLLATVSKYIAAYNEFDPSAMKTVRTPTCLTHGVAPTCKFTQSMEEHTRHMMLSRGVFRSVNASIVDDNITVVDEVSRQVVVKVKIRCETTVGPYENEAMFIMAMNEEGALVDEIFQFLDTARFRQFQGRLEEAQ.

Belongs to the trt14 isomerase family. As to quaternary structure, homodimer.

It participates in secondary metabolite biosynthesis; terpenoid biosynthesis. Its function is as follows. Part of the gene cluster B that mediates the biosynthesis of austinol and dehydroaustinol, two fungal meroterpenoids. The first step of the pathway is the synthesis of 3,5-dimethylorsellinic acid by the polyketide synthase ausA. 3,5-dimethylorsellinic acid is then prenylated by the polyprenyl transferase ausN. Further epoxidation by the FAD-dependent monooxygenase ausM and cyclization by the probable terpene cyclase ausL lead to the formation of protoaustinoid A. Protoaustinoid A is then oxidized to spiro-lactone preaustinoid A3 by the combined action of the FAD-binding monooxygenases ausB and ausC, and the dioxygenase ausE. Acid-catalyzed keto-rearrangement and ring contraction of the tetraketide portion of preaustinoid A3 by ausJ lead to the formation of preaustinoid A4. The aldo-keto reductase ausK, with the help of ausH, is involved in the next step by transforming preaustinoid A4 into isoaustinone which is in turn hydroxylated by the P450 monooxygenase ausI to form austinolide. Finally, the cytochrome P450 monooxygenase ausG modifies austinolide to austinol. Austinol can be further modified to dehydroaustinol which forms a diffusible complex with diorcinol that initiates conidiation. Due to genetic rearrangements of the clusters and the subsequent loss of some enzymes, the end products of the Emericella nidulans austinoid biosynthesis clusters are austinol and dehydroaustinol, even if additional enzymes, such as the O-acetyltransferase ausQ and the cytochrome P450 monooxygenase ausR are still functional. AusS is necessary for austinoids production and may play a possible function as a regulator. The polypeptide is Austinoid biosynthesis clusters protein S (Emericella nidulans (strain FGSC A4 / ATCC 38163 / CBS 112.46 / NRRL 194 / M139) (Aspergillus nidulans)).